The following is a 408-amino-acid chain: Phosphatidylinositol transfer protein CSR1 (408 aa).

Residue Ser-2 is modified to N-acetylserine. Ser-2 bears the Phosphoserine mark. Positions 157–317 (ETGVIKNLEL…YLGGENDNDL (161 aa)) constitute a CRAL-TRIO domain.

Belongs to the PITP family. Forms a complex with 2 TSA2 subunits. Binds phosphatidylinositol (PtdIns).

Its subcellular location is the cytoplasm. It localises to the microsome. It is found in the endosome. It catalyses the reaction a 1,2-diacyl-sn-glycero-3-phospho-(1D-myo-inositol)(in) = a 1,2-diacyl-sn-glycero-3-phospho-(1D-myo-inositol)(out). In terms of biological role, non-classical phosphatidylinositol (PtdIns) transfer protein (PITP), which exhibits PtdIns-binding/transfer activity in the absence of detectable PtdCho-binding/transfer activity. Activates SPO14/PLD1 (phospholipase D1) by stimulating phosphoinositide synthesis via the STT4 PtdIns 4-kinase. Modulates ArfGAP function through effects on SPO14 activity. Inhibits phosphatidylcholine degradation by PLB1 (phospholipase B1). May also regulate post-Golgi membrane-trafficking events and have a role resistance to oxidative stress. Inhibits fatty acid synthase activity in response to heme depletion and oleic acid starvation, preventing saturated fatty acid (SFA) accumulation. This is Phosphatidylinositol transfer protein CSR1 (CSR1) from Saccharomyces cerevisiae (strain ATCC 204508 / S288c) (Baker's yeast).